A 556-amino-acid polypeptide reads, in one-letter code: Adenine deaminase (556 aa).

The protein belongs to the metallo-dependent hydrolases superfamily. Adenine deaminase family. The cofactor is Mn(2+).

The enzyme catalyses adenine + H2O + H(+) = hypoxanthine + NH4(+). In Archaeoglobus fulgidus (strain ATCC 49558 / DSM 4304 / JCM 9628 / NBRC 100126 / VC-16), this protein is Adenine deaminase.